The sequence spans 140 residues: Nucleoside diphosphate kinase (140 aa).

Residues Lys-11, Phe-59, Arg-87, Thr-93, Arg-104, and Asn-114 each contribute to the ATP site. Catalysis depends on His-117, which acts as the Pros-phosphohistidine intermediate.

Belongs to the NDK family. In terms of assembly, homotetramer. The cofactor is Mg(2+).

It is found in the cytoplasm. It catalyses the reaction a 2'-deoxyribonucleoside 5'-diphosphate + ATP = a 2'-deoxyribonucleoside 5'-triphosphate + ADP. The catalysed reaction is a ribonucleoside 5'-diphosphate + ATP = a ribonucleoside 5'-triphosphate + ADP. Its function is as follows. Major role in the synthesis of nucleoside triphosphates other than ATP. The ATP gamma phosphate is transferred to the NDP beta phosphate via a ping-pong mechanism, using a phosphorylated active-site intermediate. This is Nucleoside diphosphate kinase from Methylobacterium radiotolerans (strain ATCC 27329 / DSM 1819 / JCM 2831 / NBRC 15690 / NCIMB 10815 / 0-1).